Reading from the N-terminus, the 742-residue chain is Eukaryotic translation initiation factor 3 subunit B (742 aa).

Over residues 1-10 (MAPSFDTLSE) the composition is skewed to polar residues. The disordered stretch occupies residues 1 to 20 (MAPSFDTLSEQDLHEEEEEE). An RRM domain is found at 40–126 (TFVVIDGLPI…HTLAVNKLMD (87 aa)). WD repeat units follow at residues 193–230 (AHWT…KLKQ), 232–290 (PHPF…RSFV), 304–345 (QPKK…LLGK), 515–558 (IEKK…EKPE), and 573–611 (VEHY…HTFA).

This sequence belongs to the eIF-3 subunit B family. Component of the eukaryotic translation initiation factor 3 (eIF-3) complex.

It localises to the cytoplasm. Its function is as follows. RNA-binding component of the eukaryotic translation initiation factor 3 (eIF-3) complex, which is involved in protein synthesis of a specialized repertoire of mRNAs and, together with other initiation factors, stimulates binding of mRNA and methionyl-tRNAi to the 40S ribosome. The eIF-3 complex specifically targets and initiates translation of a subset of mRNAs involved in cell proliferation. This is Eukaryotic translation initiation factor 3 subunit B (prt1) from Aspergillus terreus (strain NIH 2624 / FGSC A1156).